The sequence spans 468 residues: Lactate utilization protein B (468 aa).

4Fe-4S ferredoxin-type domains are found at residues 303–333 and 352–381; these read GTQF…GHAY and YENY…LHEL. [4Fe-4S] cluster is bound by residues Cys312, Cys315, Cys318, Cys322, Cys365, Cys368, and Cys372. The tract at residues 442-468 is disordered; sequence PAWTDSKDLPQPNKQTVRDWFKKRGNA. The span at 457 to 468 shows a compositional bias: basic and acidic residues; sequence TVRDWFKKRGNA.

This sequence belongs to the LutB/YkgF family.

Its function is as follows. Is involved in L-lactate degradation and allows cells to grow with lactate as the sole carbon source. Has probably a role as an electron transporter during oxidation of L-lactate. The protein is Lactate utilization protein B of Exiguobacterium sp. (strain ATCC BAA-1283 / AT1b).